We begin with the raw amino-acid sequence, 97 residues long: Co-chaperonin GroES (97 aa).

It belongs to the GroES chaperonin family. As to quaternary structure, heptamer of 7 subunits arranged in a ring. Interacts with the chaperonin GroEL.

The protein localises to the cytoplasm. Its function is as follows. Together with the chaperonin GroEL, plays an essential role in assisting protein folding. The GroEL-GroES system forms a nano-cage that allows encapsulation of the non-native substrate proteins and provides a physical environment optimized to promote and accelerate protein folding. GroES binds to the apical surface of the GroEL ring, thereby capping the opening of the GroEL channel. This chain is Co-chaperonin GroES, found in Pseudomonas putida (strain W619).